The chain runs to 412 residues: Phosphoglycerate kinase (412 aa).

Residues 24–26, arginine 40, 63–66, arginine 122, and arginine 162 contribute to the substrate site; these read DLN and HLGR. ATP-binding positions include lysine 212, glycine 300, glutamate 331, and 360 to 363; that span reads GGDS.

It belongs to the phosphoglycerate kinase family. In terms of assembly, monomer.

The protein resides in the cytoplasm. The catalysed reaction is (2R)-3-phosphoglycerate + ATP = (2R)-3-phospho-glyceroyl phosphate + ADP. Its pathway is carbohydrate degradation; glycolysis; pyruvate from D-glyceraldehyde 3-phosphate: step 2/5. The chain is Phosphoglycerate kinase (pgk) from Mycobacterium bovis (strain ATCC BAA-935 / AF2122/97).